The chain runs to 798 residues: MVLEFGKGAFVVDDLRNVTIKIGEIAEEEEEWAPMGPTPMPGIATLRDWDFFLLKRYKPFYAPACDMCCLCTMGKCDLTGNKRGACGIDLAAQTGRIVTIACSIGVSAHTGHARHMLHDIEHMTGKKLSEIPVDLGPEIDEVAPLTELITGIKPKTLEDLERALRYAEEQIVQVVDAVHTGQEGSYLDYESKALHLGMLDSLGKEIADIAQICAFGYPKGEDNQPLIEVGMGVMDRSKAMILVIGHHAPPVLNIADYIEENGLEDEVDLGGICCTANDMTRYYQKAKIVSALGRQLKVIRAGLADVIVIDEQCIRADILYHTKKLGIPVICTNEKAMHALPDMTKEEPKNIIKYLLDGNPGCVILDPLKVGEVAVEVARARRKQRGDDIGPRLTEEQFMEYARACTQCGNCTIACPQGIRIGEAMEAAENGDRSKLEKEWDVCIACGRCEQVCPKGIPIIDMYNYAAWNLIVNEKGKLRRGRGPIRDSEIRNVGAPIVLGTIPGIIAVIGCGNYPNGTRDAYTIMDEFASRNYIVVTTGCMAFDAALYKDEEGQTVYEKYHDRFDGGGVVQIGSCVANAHIHGAAIKVARIFAKRNIRANYEEIADYILNRVGACGVAWGAYSQKAASIATGFNRLGIPAVVGPHGSKYRRAFLGRPYNDEDWMVYDARTGEKVRIEPAPQDLLVAAETIEEAIPLMAKLCFRPNDTTQGRSIKLTHYIDLSLKYLKRMPDDWHLFVRTEADLPLAKKEELLKELEDKHGWKIDWQKKKIVEGPIRGYHAGFNPTNLERCLRDGFMTV.

6 residues coordinate [4Fe-4S] cluster: Cys65, Cys68, Cys69, Cys71, Cys76, and Cys86. His109 serves as a coordination point for CO. Positions 246, 274, and 313 each coordinate [Ni-4Fe-4S] cluster. 4Fe-4S ferredoxin-type domains follow at residues Glu395–Ala424 and Ser434–Tyr463. [4Fe-4S] cluster is bound by residues Cys405, Cys408, Cys411, Cys415, Cys443, Cys446, Cys449, and Cys453. The [Ni-4Fe-4S] cluster site is built by Cys511, Cys540, and Cys575.

This sequence belongs to the Ni-containing carbon monoxide dehydrogenase family. In terms of assembly, heterotetramer of two alpha and two epsilon subunits. The ACDS complex is made up of alpha, epsilon, beta, gamma and delta subunits with a probable stoichiometry of (alpha(2)epsilon(2))(4)-beta(8)-(gamma(1)delta(1))(8). Requires [4Fe-4S] cluster as cofactor. [Ni-4Fe-4S] cluster is required as a cofactor.

It catalyses the reaction CO + 2 oxidized [2Fe-2S]-[ferredoxin] + H2O = 2 reduced [2Fe-2S]-[ferredoxin] + CO2 + 2 H(+). In terms of biological role, part of the ACDS complex that catalyzes the reversible cleavage of acetyl-CoA, allowing autotrophic growth from CO(2). The alpha-epsilon subcomponent functions as a carbon monoxide dehydrogenase. In Archaeoglobus fulgidus (strain ATCC 49558 / DSM 4304 / JCM 9628 / NBRC 100126 / VC-16), this protein is Acetyl-CoA decarbonylase/synthase complex subunit alpha 2.